Here is a 164-residue protein sequence, read N- to C-terminus: Transcription elongation factor GreA (164 aa).

The stretch at 15 to 76 forms a coiled coil; it reads DRLKNELDQL…LQELLNSAKV (62 aa).

It belongs to the GreA/GreB family.

Its function is as follows. Necessary for efficient RNA polymerase transcription elongation past template-encoded arresting sites. The arresting sites in DNA have the property of trapping a certain fraction of elongating RNA polymerases that pass through, resulting in locked ternary complexes. Cleavage of the nascent transcript by cleavage factors such as GreA or GreB allows the resumption of elongation from the new 3'terminus. GreA releases sequences of 2 to 3 nucleotides. The protein is Transcription elongation factor GreA of Rhodococcus erythropolis (strain PR4 / NBRC 100887).